Reading from the N-terminus, the 623-residue chain is Chaperone protein DnaK (623 aa).

The residue at position 175 (Thr175) is a Phosphothreonine; by autocatalysis. A disordered region spans residues 580–623 (PEGAQGAGFDPNNMGGANAGNASAENDKKDDNVVDADYKVEDDK). Low complexity predominate over residues 591–603 (NNMGGANAGNASA). The span at 604 to 623 (ENDKKDDNVVDADYKVEDDK) shows a compositional bias: basic and acidic residues.

This sequence belongs to the heat shock protein 70 family.

Functionally, acts as a chaperone. This is Chaperone protein DnaK from Clostridium botulinum (strain Okra / Type B1).